Reading from the N-terminus, the 450-residue chain is Glucose-6-phosphate isomerase (450 aa).

E291 serves as the catalytic Proton donor. Active-site residues include H312 and K426.

Belongs to the GPI family.

Its subcellular location is the cytoplasm. The enzyme catalyses alpha-D-glucose 6-phosphate = beta-D-fructose 6-phosphate. It participates in carbohydrate biosynthesis; gluconeogenesis. It functions in the pathway carbohydrate degradation; glycolysis; D-glyceraldehyde 3-phosphate and glycerone phosphate from D-glucose: step 2/4. Its function is as follows. Catalyzes the reversible isomerization of glucose-6-phosphate to fructose-6-phosphate. The polypeptide is Glucose-6-phosphate isomerase (Clostridium botulinum (strain Hall / ATCC 3502 / NCTC 13319 / Type A)).